Reading from the N-terminus, the 478-residue chain is Glycogen synthase (478 aa).

Lys-16 lines the ADP-alpha-D-glucose pocket.

It belongs to the glycosyltransferase 1 family. Bacterial/plant glycogen synthase subfamily.

It carries out the reaction [(1-&gt;4)-alpha-D-glucosyl](n) + ADP-alpha-D-glucose = [(1-&gt;4)-alpha-D-glucosyl](n+1) + ADP + H(+). It functions in the pathway glycan biosynthesis; glycogen biosynthesis. Functionally, synthesizes alpha-1,4-glucan chains using ADP-glucose. The protein is Glycogen synthase of Lachnoclostridium phytofermentans (strain ATCC 700394 / DSM 18823 / ISDg) (Clostridium phytofermentans).